A 1021-amino-acid polypeptide reads, in one-letter code: Sodium/potassium-transporting ATPase subunit alpha-1 (1021 aa).

The propeptide occupies 1–5 (MGKGA). The segment covering 1-11 (MGKGAGRDKYE) has biased composition (basic and acidic residues). The tract at residues 1–31 (MGKGAGRDKYEPTATSEHGTKKKKAKERDMD) is disordered. Over 6 to 85 (GRDKYEPTAT…NTLTPPPTTP (80 aa)) the chain is Cytoplasmic. Tyr10 carries the phosphotyrosine modification. Ser16 carries the phosphoserine; by PKC modification. The segment at 80 to 82 (PPP) is phosphoinositide-3 kinase binding. A helical membrane pass occupies residues 86–106 (EWVKFCRQLFGGFSLLLWIGS). Over 107 to 129 (LLCFLAYGITSVMEGEPNSDNLY) the chain is Extracellular. A helical transmembrane segment spans residues 130-150 (LGVVLAAVVIITGCFSYYQEA). Residues 151–286 (KSSKIMESFK…GGKTPIAMEI (136 aa)) lie on the Cytoplasmic side of the membrane. A disordered region spans residues 214-233 (SSLTGESEPQTRSPDFSNEN). A helical membrane pass occupies residues 287–306 (EHFIHLITGVAVFLGVSFFI). Residues 307 to 318 (LSLILEYTWLEA) lie on the Extracellular side of the membrane. The chain crosses the membrane as a helical span at residues 319-336 (VIFLIGIIVANVPEGLLA). Residues 337–770 (TVTVCLTLTA…EEGRLIFDNL (434 aa)) are Cytoplasmic-facing. Asp374 acts as the 4-aspartylphosphate intermediate in catalysis. Position 485 (Lys485) interacts with ATP. Residues Asp715 and Asp719 each coordinate Mg(2+). The chain crosses the membrane as a helical span at residues 771–790 (KKSIAYTLTSNIPEITPFLI). The Extracellular portion of the chain corresponds to 791-800 (FIIANIPLPL). Residues 801 to 821 (GTCTILCIDLGTDMVPAISLA) traverse the membrane as a helical segment. At 822 to 841 (YEQAESDIMKRQPRNPKTDK) the chain is on the cytoplasmic side. The helical transmembrane segment at 842-864 (LVNERLISMAYGQIGMIQALGGF) threads the bilayer. Residues 865 to 916 (FTYFVIMAENGFLPSGLVGIRLQWDDRWINDVEDSYGQQWTFEQRKIVEFTC) are Extracellular-facing. The chain crosses the membrane as a helical span at residues 917 to 936 (HTAFFVSIVVVQWADLIICK). The Cytoplasmic segment spans residues 937–949 (TRRNSVFQQGMKN). Position 941 is a phosphoserine; by PKA (Ser941). The helical transmembrane segment at 950–968 (KILIFGLFEETALAAFLSY) threads the bilayer. At 969–983 (CPGMDVALRMYPLKP) the chain is on the extracellular side. Residues 984-1004 (TWWFCAFPYSLLIFLYDEIRK) traverse the membrane as a helical segment. The Cytoplasmic portion of the chain corresponds to 1005–1021 (LIIRRNPGGWVERETYY).

The protein belongs to the cation transport ATPase (P-type) (TC 3.A.3) family. Type IIC subfamily. The sodium/potassium-transporting ATPase is composed of a catalytic alpha subunit, an auxiliary non-catalytic beta subunit and an additional regulatory subunit. Post-translationally, phosphorylation on Tyr-10 modulates pumping activity.

The protein localises to the cell membrane. The protein resides in the sarcolemma. The enzyme catalyses K(+)(out) + Na(+)(in) + ATP + H2O = K(+)(in) + Na(+)(out) + ADP + phosphate + H(+). Functionally, this is the catalytic component of the active enzyme, which catalyzes the hydrolysis of ATP coupled with the exchange of sodium and potassium ions across the plasma membrane. This action creates the electrochemical gradient of sodium and potassium ions, providing the energy for active transport of various nutrients. This is Sodium/potassium-transporting ATPase subunit alpha-1 (ATP1A1) from Gallus gallus (Chicken).